We begin with the raw amino-acid sequence, 521 residues long: Bifunctional purine biosynthesis protein PurH (521 aa).

An MGS-like domain is found at 1-145 (MIKQALISVS…KNHRDVTVVV (145 aa)).

The protein belongs to the PurH family.

It carries out the reaction (6R)-10-formyltetrahydrofolate + 5-amino-1-(5-phospho-beta-D-ribosyl)imidazole-4-carboxamide = 5-formamido-1-(5-phospho-D-ribosyl)imidazole-4-carboxamide + (6S)-5,6,7,8-tetrahydrofolate. The catalysed reaction is IMP + H2O = 5-formamido-1-(5-phospho-D-ribosyl)imidazole-4-carboxamide. It functions in the pathway purine metabolism; IMP biosynthesis via de novo pathway; 5-formamido-1-(5-phospho-D-ribosyl)imidazole-4-carboxamide from 5-amino-1-(5-phospho-D-ribosyl)imidazole-4-carboxamide (10-formyl THF route): step 1/1. The protein operates within purine metabolism; IMP biosynthesis via de novo pathway; IMP from 5-formamido-1-(5-phospho-D-ribosyl)imidazole-4-carboxamide: step 1/1. The chain is Bifunctional purine biosynthesis protein PurH from Burkholderia ambifaria (strain MC40-6).